A 322-amino-acid polypeptide reads, in one-letter code: tRNA dimethylallyltransferase (322 aa).

12–19 is a binding site for ATP; it reads GPTAAGKT. Residue 14–19 participates in substrate binding; sequence TAAGKT. 2 interaction with substrate tRNA regions span residues 37 to 40 and 160 to 164; these read DSAL and QRLIR.

The protein belongs to the IPP transferase family. As to quaternary structure, monomer. Mg(2+) serves as cofactor.

It carries out the reaction adenosine(37) in tRNA + dimethylallyl diphosphate = N(6)-dimethylallyladenosine(37) in tRNA + diphosphate. Catalyzes the transfer of a dimethylallyl group onto the adenine at position 37 in tRNAs that read codons beginning with uridine, leading to the formation of N6-(dimethylallyl)adenosine (i(6)A). In Pseudomonas putida (Arthrobacter siderocapsulatus), this protein is tRNA dimethylallyltransferase.